The following is a 1380-amino-acid chain: DNA-directed RNA polymerase subunit beta (1380 aa).

Belongs to the RNA polymerase beta chain family. In terms of assembly, the RNAP catalytic core consists of 2 alpha, 1 beta, 1 beta' and 1 omega subunit. When a sigma factor is associated with the core the holoenzyme is formed, which can initiate transcription.

It carries out the reaction RNA(n) + a ribonucleoside 5'-triphosphate = RNA(n+1) + diphosphate. In terms of biological role, DNA-dependent RNA polymerase catalyzes the transcription of DNA into RNA using the four ribonucleoside triphosphates as substrates. This Nitrobacter hamburgensis (strain DSM 10229 / NCIMB 13809 / X14) protein is DNA-directed RNA polymerase subunit beta.